Consider the following 248-residue polypeptide: Probable transcriptional regulatory protein BRADO1143 (248 aa).

The protein belongs to the TACO1 family.

It localises to the cytoplasm. This Bradyrhizobium sp. (strain ORS 278) protein is Probable transcriptional regulatory protein BRADO1143.